We begin with the raw amino-acid sequence, 569 residues long: 2-isopropylmalate synthase (569 aa).

A Pyruvate carboxyltransferase domain is found at 31 to 305 (PRWMSTDLRD…APELDFSDID (275 aa)). The Mg(2+) site is built by Asp-40, His-244, His-246, and Asn-280. A regulatory domain region spans residues 437–569 (RETPLRYVSH…TASASAATEA (133 aa)).

Belongs to the alpha-IPM synthase/homocitrate synthase family. LeuA type 2 subfamily. Homodimer. It depends on Mg(2+) as a cofactor.

It is found in the cytoplasm. It catalyses the reaction 3-methyl-2-oxobutanoate + acetyl-CoA + H2O = (2S)-2-isopropylmalate + CoA + H(+). Its pathway is amino-acid biosynthesis; L-leucine biosynthesis; L-leucine from 3-methyl-2-oxobutanoate: step 1/4. In terms of biological role, catalyzes the condensation of the acetyl group of acetyl-CoA with 3-methyl-2-oxobutanoate (2-ketoisovalerate) to form 3-carboxy-3-hydroxy-4-methylpentanoate (2-isopropylmalate). The polypeptide is 2-isopropylmalate synthase (Cupriavidus taiwanensis (strain DSM 17343 / BCRC 17206 / CCUG 44338 / CIP 107171 / LMG 19424 / R1) (Ralstonia taiwanensis (strain LMG 19424))).